The sequence spans 299 residues: Ectoine dioxygenase (299 aa).

The segment at 1–40 (MTTTTTNVTDLYPTRGATEVATPRQDPVVWGSPDAPGPVS) is disordered. Gln-133 lines the L-ectoine pocket. Lys-139 provides a ligand contact to 2-oxoglutarate. Positions 150, 152, and 251 each coordinate Fe cation.

This sequence belongs to the PhyH family. EctD subfamily. In terms of assembly, homodimer. The cofactor is Fe(2+).

The catalysed reaction is L-ectoine + 2-oxoglutarate + O2 = 5-hydroxyectoine + succinate + CO2. Its function is as follows. Involved in the biosynthesis of 5-hydroxyectoine, called compatible solute, which helps organisms to survive extreme osmotic stress by acting as a highly soluble organic osmolyte. Catalyzes the 2-oxoglutarate-dependent selective hydroxylation of L-ectoine to yield (4S,5S)-5-hydroxyectoine. The chain is Ectoine dioxygenase from Streptomyces coelicolor (strain ATCC BAA-471 / A3(2) / M145).